The chain runs to 1020 residues: Non-canonical nonribosomal peptide synthetase hkm10 (1020 aa).

Positions glutamine 21 to arginine 419 are adenylation (A) domain. In terms of domain architecture, Carrier spans glutamine 526–glutamine 608. Serine 568 carries the post-translational modification O-(pantetheine 4'-phosphoryl)serine. Positions leucine 652 to threonine 894 are short-chain dehydrogenase/reductase (R) domain.

The protein belongs to the NRP synthetase family.

Its pathway is secondary metabolite biosynthesis. Non-canonical nonribosomal peptide synthetase; part of the gene cluster that mediates the biosynthesis of hancockiamides, an unusual new family of N-cinnamoylated piperazines. The NRPS hkm10 and the NmrA-like reductase hkm9 are proposed to convert two molecules of L-Phe to the intermediary piperazine called xenocockiamide A. Xenocockiamide A is then converted to hancockiamide D via a series of hydroxylations and O-methylations. The tyrosinase hkm6 may catalyze an aromatic hydroxylation, then the 2-oxoglutarate-dependent Fe(II) dioxygenase hkm4 and the FAD-dependent phenol hydroxylase hkm7 may catalyze consecutive hydroxylations to install 2 more hydroxy groups, and the methyltransferase hkm8 probably catalyzes two methylations using 2 molecules of S-adenosyl-L-methionine (SAM). The NRPS hkm11 activates and transfers trans-cinnamate supplied by the PAL hkm12 to hancockiamide D and produces hancockiamide A. NRPS Hkm11 has the flexibility to tolerate the bulky hancockiamide G as a substrate and the absence of the acetyl-transferase hkm3 opens up the opportunity for hkm11 to introduce a second N-cinnamoyl moiety. The cytochrome P450 monooxygenase hkm5 catalyzes the methylenedioxy bridge formation, converting hancockiamide A into hancockiamide G. Hkm5 can also convert hancockiamide B into hancockiamide C, and hancockiamide D into hancockiamide H. The N-acetyltransferase hkm3 finally transfers an acetyl group to 1-N of piperazine, converting hancockiamide A into hancockiamide B and hancockiamide G into hancockiamide C. This chain is Non-canonical nonribosomal peptide synthetase hkm10, found in Aspergillus hancockii.